A 504-amino-acid chain; its full sequence is 2,3-bisphosphoglycerate-independent phosphoglycerate mutase (504 aa).

D11 and S61 together coordinate Mn(2+). S61 functions as the Phosphoserine intermediate in the catalytic mechanism. Residues H122, 152–153 (RD), R183, R189, 255–258 (RNDR), and K329 each bind substrate. Residues D396, H400, D437, H438, and H455 each coordinate Mn(2+).

It belongs to the BPG-independent phosphoglycerate mutase family. Monomer. Mn(2+) is required as a cofactor.

The enzyme catalyses (2R)-2-phosphoglycerate = (2R)-3-phosphoglycerate. The protein operates within carbohydrate degradation; glycolysis; pyruvate from D-glyceraldehyde 3-phosphate: step 3/5. Functionally, catalyzes the interconversion of 2-phosphoglycerate and 3-phosphoglycerate. In Bacteroides thetaiotaomicron (strain ATCC 29148 / DSM 2079 / JCM 5827 / CCUG 10774 / NCTC 10582 / VPI-5482 / E50), this protein is 2,3-bisphosphoglycerate-independent phosphoglycerate mutase.